Here is a 516-residue protein sequence, read N- to C-terminus: Probable malate:quinone oxidoreductase (516 aa).

The protein belongs to the MQO family. Requires FAD as cofactor.

The catalysed reaction is (S)-malate + a quinone = a quinol + oxaloacetate. It participates in carbohydrate metabolism; tricarboxylic acid cycle; oxaloacetate from (S)-malate (quinone route): step 1/1. In Mycobacterium sp. (strain MCS), this protein is Probable malate:quinone oxidoreductase.